Reading from the N-terminus, the 146-residue chain is Mitochondrial pyruvate carrier 3 (146 aa).

A mitochondrion-targeting transit peptide spans 1-20 (MSASAFNFAFRRFWNSETGP). 3 helical membrane passes run 23–39 (VHFW…FAGL), 55–71 (LSLL…SFVI), and 78–94 (LASV…YHLT).

This sequence belongs to the mitochondrial pyruvate carrier (MPC) (TC 2.A.105) family. The functional 150 kDa pyruvate import complex is a heteromer of MPC1 and either MPC2 or MPC3.

It localises to the mitochondrion. It is found in the mitochondrion inner membrane. Functionally, mediates the uptake of pyruvate into mitochondria. The chain is Mitochondrial pyruvate carrier 3 from Saccharomyces cerevisiae (strain ATCC 204508 / S288c) (Baker's yeast).